The primary structure comprises 582 residues: uncharacterized protein (582 aa).

The segment covering methionine 1–arginine 23 has biased composition (basic and acidic residues). Disordered stretches follow at residues methionine 1–valine 29, alanine 110–glutamine 133, and leucine 147–glycine 221. The residue at position 242 (serine 242) is a Phosphoserine. 2 disordered regions span residues arginine 310 to histidine 331 and leucine 551 to arginine 582. A compositionally biased stretch (polar residues) spans proline 311 to alanine 320.

This is an uncharacterized protein from Homo sapiens (Human).